The chain runs to 420 residues: Caspase-12 (420 aa).

The CARD domain maps to 1–92 (MAAKRTHERD…QLSLQFPSDD (92 aa)). 2 positions are modified to phosphoserine: Ser-85 and Ser-90. Residues 93–115 (EEDELQKMFTPSSASESRGKVED) are disordered. Active-site residues include His-251 and Cys-299.

The protein belongs to the peptidase C14A family. As to quaternary structure, heterotetramer that consists of two anti-parallel arranged heterodimers, each one formed by two subunits (Potential). May interact with TRAF2.

In terms of biological role, involved in the activation cascade of caspases responsible for apoptosis execution. In Rattus norvegicus (Rat), this protein is Caspase-12 (Casp12).